The sequence spans 244 residues: Mannose-binding protein C (244 aa).

An N-terminal signal peptide occupies residues 1–18 (MSIFTSFLLLCVVTVVYA). One can recognise a Collagen-like domain in the interval 38–96 (GLNGFPGKDGRDGAKGEKGEPGQGLRGLQGPPGKVGPTGPPGNPGLKGAVGPKGDRGDR). The segment at 40 to 101 (NGFPGKDGRD…DRGDRAEFDT (62 aa)) is disordered. Position 43 is a 4-hydroxyproline (Pro-43). The segment covering 45-57 (KDGRDGAKGEKGE) has biased composition (basic and acidic residues). 4 positions are modified to 4-hydroxyproline: Pro-58, Pro-69, Pro-78, and Pro-81. Residues 65-74 (LQGPPGKVGP) show a composition bias toward low complexity. Basic and acidic residues predominate over residues 90–99 (KGDRGDRAEF). Residues 108–126 (IAALRSELRALRNWVLFSL) are a coiled coil. Positions 129–241 (KVGKKYFVSS…CSDSFLAICE (113 aa)) constitute a C-type lectin domain. 2 disulfides stabilise this stretch: Cys-151/Cys-240 and Cys-218/Cys-232. Residue Asn-210 is glycosylated (N-linked (GlcNAc...) asparagine).

Oligomeric complex of 3 or more homotrimers. Interacts with MASP1 and MASP2. Interacts with MEP1A and MEP1B and may inhibit their catalytic activity. In terms of processing, hydroxylation on proline residues within the sequence motif, GXPG, is most likely to be 4-hydroxy as this fits the requirement for 4-hydroxylation in vertebrates.

The protein resides in the secreted. Its function is as follows. Calcium-dependent lectin involved in innate immune defense. Binds mannose, fucose and N-acetylglucosamine on different microorganisms and activates the lectin complement pathway. Binds to late apoptotic cells, as well as to apoptotic blebs and to necrotic cells, but not to early apoptotic cells, facilitating their uptake by macrophages. In Mus musculus (Mouse), this protein is Mannose-binding protein C (Mbl2).